The primary structure comprises 266 residues: Diphthine synthase (266 aa).

Residues leucine 9, aspartate 84, valine 87, 112–113, leucine 169, alanine 210, and histidine 235 each bind S-adenosyl-L-methionine; that span reads SI.

Belongs to the diphthine synthase family. As to quaternary structure, homodimer.

The catalysed reaction is 2-[(3S)-amino-3-carboxypropyl]-L-histidyl-[translation elongation factor 2] + 3 S-adenosyl-L-methionine = diphthine-[translation elongation factor 2] + 3 S-adenosyl-L-homocysteine + 3 H(+). It functions in the pathway protein modification; peptidyl-diphthamide biosynthesis. Its function is as follows. S-adenosyl-L-methionine-dependent methyltransferase that catalyzes the trimethylation of the amino group of the modified target histidine residue in translation elongation factor 2 (EF-2), to form an intermediate called diphthine. The three successive methylation reactions represent the second step of diphthamide biosynthesis. The sequence is that of Diphthine synthase from Methanosarcina acetivorans (strain ATCC 35395 / DSM 2834 / JCM 12185 / C2A).